The primary structure comprises 316 residues: Very-long-chain 3-oxooacyl-coA reductase let-767 (316 aa).

NADP(+)-binding positions include 52–80 (ITGATDGIGKAYAFELARRGFNVFIVSRT) and Asp-106. Ser-189 provides a ligand contact to substrate. Tyr-202 functions as the Proton acceptor in the catalytic mechanism. Position 206 (Lys-206) interacts with NADP(+).

Belongs to the short-chain dehydrogenases/reductases (SDR) family. 17-beta-HSD 3 subfamily.

It catalyses the reaction a very-long-chain (3R)-3-hydroxyacyl-CoA + NADP(+) = a very-long-chain 3-oxoacyl-CoA + NADPH + H(+). Its pathway is lipid metabolism; fatty acid biosynthesis. Its function is as follows. Required for branched chain fatty acid synthesis. Catalyzes the reduction of the 3-ketoacyl-CoA intermediate that is formed in each cycle of fatty acid elongation. Very long-chain fatty acids (VLCFAs) serve as precursors for ceramide and sphingolipids. May also be required for sterol hormone production. This is Very-long-chain 3-oxooacyl-coA reductase let-767 from Caenorhabditis briggsae.